A 363-amino-acid polypeptide reads, in one-letter code: Trichocyst matrix protein T4-B (363 aa).

Positions 1–17 (MARSLTILAIVFAVATA) are cleaved as a signal peptide. A propeptide spanning residues 18 to 52 (RVTKSESPKEILAQVNKDSFGNSILSVLQLQLATG) is cleaved from the precursor. The stretch at 85 to 119 (VAFEKIIADLEQEIAYHQTQIVALSNLRDSTTEAL) forms a coiled coil. A propeptide spanning residues 190–221 (RFEKVQAKLMESKHALFKPLINALTQLASKVD) is cleaved from the precursor. A coiled-coil region spans residues 244–352 (ASLLATEERQ…EVLTQKLSAA (109 aa)).

It belongs to the TMP family. Two components are produced by post-translational processing from the precursor peptide.

The protein localises to the trichocyst. In terms of biological role, structural protein that crystallize inside the trichocyst matrix. This is Trichocyst matrix protein T4-B (T4B) from Paramecium tetraurelia.